We begin with the raw amino-acid sequence, 457 residues long: Adenylosuccinate synthetase isozyme 1 (457 aa).

A disordered region spans residues 1-21 (MSGTRASNDRPPGAGGVKRGR). Residues 42–48 (GDEGKGK) and 70–72 (GHT) contribute to the GTP site. Aspartate 43 functions as the Proton acceptor in the catalytic mechanism. Residues aspartate 43 and glycine 70 each coordinate Mg(2+). Aspartate 43 contacts substrate. IMP-binding positions include 43 to 46 (DEGK), 68 to 71 (NAGH), threonine 163, arginine 177, asparagine 256, threonine 271, and arginine 335. Residue histidine 71 is the Proton donor of the active site. Residue 331–337 (VTTGRKR) participates in substrate binding. GTP is bound by residues arginine 337, 363–365 (KLD), and 445–448 (GVGK).

The protein belongs to the adenylosuccinate synthetase family. As to quaternary structure, homodimer. It depends on Mg(2+) as a cofactor. As to expression, predominantly expressed in skeletal muscle and heart, as well as in several hematopoietic cell lines and solid tumors.

Its subcellular location is the cytoplasm. The enzyme catalyses IMP + L-aspartate + GTP = N(6)-(1,2-dicarboxyethyl)-AMP + GDP + phosphate + 2 H(+). Its pathway is purine metabolism; AMP biosynthesis via de novo pathway; AMP from IMP: step 1/2. Its function is as follows. Component of the purine nucleotide cycle (PNC), which interconverts IMP and AMP to regulate the nucleotide levels in various tissues, and which contributes to glycolysis and ammoniagenesis. Catalyzes the first committed step in the biosynthesis of AMP from IMP. This is Adenylosuccinate synthetase isozyme 1 from Homo sapiens (Human).